The following is a 101-amino-acid chain: Small ribosomal subunit protein bS18c (101 aa).

Positions 1-19 (MNKSKRPFTKSKRSFRRRL) are enriched in basic residues. Residues 1 to 23 (MNKSKRPFTKSKRSFRRRLPPIQ) are disordered.

Belongs to the bacterial ribosomal protein bS18 family. In terms of assembly, part of the 30S ribosomal subunit.

The protein localises to the plastid. The protein resides in the chloroplast. This is Small ribosomal subunit protein bS18c from Lobularia maritima (Sweet alyssum).